A 527-amino-acid chain; its full sequence is 4-alpha-glucanotransferase (527 aa).

This sequence belongs to the disproportionating enzyme family.

It localises to the cytoplasm. The catalysed reaction is Transfers a segment of a (1-&gt;4)-alpha-D-glucan to a new position in an acceptor, which may be glucose or a (1-&gt;4)-alpha-D-glucan.. This is 4-alpha-glucanotransferase (malQ) from Chlamydia muridarum (strain MoPn / Nigg).